Reading from the N-terminus, the 449-residue chain is Chitobiosyldiphosphodolichol beta-mannosyltransferase (449 aa).

Topologically, residues 1–7 (MFLEIPR) are lumenal. A helical membrane pass occupies residues 8–28 (WLLALIILYLSIPLVVYYVIP). Residues 21–32 (LVVYYVIPYLFY) carry the Dolichol recognition motif. At 29-104 (YLFYGNKSTK…SNLKRKGGGT (76 aa)) the chain is on the cytoplasmic side. Residues 105 to 125 (SVIFMVKKVLFQVLSIFKLLW) constitute an intramembrane region (helical). Over 126–449 (ELRGSDYILV…RTMRDLKLIH (324 aa)) the chain is Cytoplasmic. The segment at 435–449 (QSNWERTMRDLKLIH) is required for oligomerization.

This sequence belongs to the glycosyltransferase group 1 family. Glycosyltransferase 33 subfamily. As to quaternary structure, homodimer. ALG1 forms mannosyltransferases (MT) heteromeric complexes with either ALG2 or ALG11.

The protein resides in the endoplasmic reticulum membrane. It catalyses the reaction an N,N'-diacetylchitobiosyl-diphospho-di-trans,poly-cis-dolichol + GDP-alpha-D-mannose = a beta-D-Man-(1-&gt;4)-beta-D-GlcNAc-(1-&gt;4)-alpha-D-GlcNAc-diphospho-di-trans,poly-cis-dolichol + GDP + H(+). The protein operates within protein modification; protein glycosylation. Participates in the formation of the lipid-linked precursor oligosaccharide for N-glycosylation. Involved in assembling the dolichol-pyrophosphate-GlcNAc(2)-Man(5) intermediate on the cytoplasmic surface of the ER. In Saccharomyces cerevisiae (strain ATCC 204508 / S288c) (Baker's yeast), this protein is Chitobiosyldiphosphodolichol beta-mannosyltransferase (ALG1).